The chain runs to 714 residues: Testis-expressed protein 13D (714 aa).

Disordered stretches follow at residues glycine 300–aspartate 419 and arginine 431–phenylalanine 675. Basic and acidic residues-rich tracts occupy residues serine 307–glutamine 320 and glycine 366–lysine 378. The span at arginine 379–histidine 392 shows a compositional bias: basic residues. A compositionally biased stretch (polar residues) spans threonine 403–glycine 416. Basic and acidic residues-rich tracts occupy residues cysteine 495–glutamine 505, cysteine 557–glutamine 567, and serine 636–lysine 646. The segment at valine 677 to proline 706 adopts a RanBP2-type zinc-finger fold.

This sequence belongs to the TEX13 family.

This Homo sapiens (Human) protein is Testis-expressed protein 13D.